Reading from the N-terminus, the 312-residue chain is tRNA-dihydrouridine(16) synthase (312 aa).

FMN-binding positions include 7-9 and Gln-68; that span reads PME. Cys-98 (proton donor) is an active-site residue. Residues Lys-139, 200–202, and 224–225 contribute to the FMN site; these read NGE and GR.

The protein belongs to the Dus family. DusC subfamily. It depends on FMN as a cofactor.

It catalyses the reaction 5,6-dihydrouridine(16) in tRNA + NADP(+) = uridine(16) in tRNA + NADPH + H(+). The enzyme catalyses 5,6-dihydrouridine(16) in tRNA + NAD(+) = uridine(16) in tRNA + NADH + H(+). Functionally, catalyzes the synthesis of 5,6-dihydrouridine (D), a modified base found in the D-loop of most tRNAs, via the reduction of the C5-C6 double bond in target uridines. Specifically modifies U16 in tRNAs. The polypeptide is tRNA-dihydrouridine(16) synthase (Yersinia pestis).